A 393-amino-acid polypeptide reads, in one-letter code: MKRPVTGKDLMIVNMGPHHPSMHGVLRLIVTLDGEDVVDCEPILGYLHRGMEKIAENRAIIQYLPYVTRWDYLATMFTEAITVNGPEQLGNIQVPKRASYIRVIMLELSRIASHLLWLGPFMADIGAQTPFFYIFREREFVYDLFEAATGMRMMHNFFRIGGIAADLPYGWIDKCLDFCDYFLTEVVEYQKLITRNPIFLERVEGVGIVGGEEAINWGLSGPMLRASGIPWDLRKVDRYESYDEFEWEIQWQKQGDSLARYLVRLSEMTESIKIIQQALEGLPGGPYENLESRGFDRKRNPEWNDFEYRFISKKPSPTFELSKQELYVRVEAPKGELGIFLIGDQSGFPWRWKIRPPGFINLQILPELVKRMKLADIMTILGSIDIIMGEVDR.

The protein belongs to the complex I 49 kDa subunit family. In terms of assembly, NDH is composed of at least 16 different subunits, 5 of which are encoded in the nucleus.

Its subcellular location is the plastid. It is found in the chloroplast thylakoid membrane. The catalysed reaction is a plastoquinone + NADH + (n+1) H(+)(in) = a plastoquinol + NAD(+) + n H(+)(out). It carries out the reaction a plastoquinone + NADPH + (n+1) H(+)(in) = a plastoquinol + NADP(+) + n H(+)(out). In terms of biological role, NDH shuttles electrons from NAD(P)H:plastoquinone, via FMN and iron-sulfur (Fe-S) centers, to quinones in the photosynthetic chain and possibly in a chloroplast respiratory chain. The immediate electron acceptor for the enzyme in this species is believed to be plastoquinone. Couples the redox reaction to proton translocation, and thus conserves the redox energy in a proton gradient. This chain is NAD(P)H-quinone oxidoreductase subunit H, chloroplastic, found in Barbarea verna (Land cress).